A 160-amino-acid chain; its full sequence is Lipoprotein signal peptidase (160 aa).

Helical transmembrane passes span 59–79 and 84–104; these read PEGI…YVWI and SPLF…NLID. Catalysis depends on residues Asp113 and Asp139. The helical transmembrane segment at 132 to 152 threads the bilayer; the sequence is WPIFNIADACITIGACLLFFF.

Belongs to the peptidase A8 family.

The protein resides in the cell inner membrane. The enzyme catalyses Release of signal peptides from bacterial membrane prolipoproteins. Hydrolyzes -Xaa-Yaa-Zaa-|-(S,diacylglyceryl)Cys-, in which Xaa is hydrophobic (preferably Leu), and Yaa (Ala or Ser) and Zaa (Gly or Ala) have small, neutral side chains.. The protein operates within protein modification; lipoprotein biosynthesis (signal peptide cleavage). This protein specifically catalyzes the removal of signal peptides from prolipoproteins. In Chlorobaculum parvum (strain DSM 263 / NCIMB 8327) (Chlorobium vibrioforme subsp. thiosulfatophilum), this protein is Lipoprotein signal peptidase.